Consider the following 777-residue polypeptide: Polyribonucleotide nucleotidyltransferase (777 aa).

D494 and D500 together coordinate Mg(2+). The 60-residue stretch at 561 to 620 folds into the KH domain; it reads PRIITLQIDPSKIGALIGPGGKTIRSIIEQTGAQIDVEDDGRVFVTTPDADGARMAQSLI. Positions 630–699 constitute an S1 motif domain; the sequence is GEIFTGKVVR…GTGKLSLSRR (70 aa). A disordered region spans residues 703–777; it reads TGETAEQRKS…NDRRGGGFRG (75 aa). Residues 718 to 727 are compositionally biased toward gly residues; sequence GPRGGGGGGD. 2 stretches are compositionally biased toward basic and acidic residues: residues 728–761 and 768–777; these read RGPRPGGDRGPRPEGDRGPRPEGDRPREGGDRGP and NDRRGGGFRG.

It belongs to the polyribonucleotide nucleotidyltransferase family. Requires Mg(2+) as cofactor.

The protein localises to the cytoplasm. It catalyses the reaction RNA(n+1) + phosphate = RNA(n) + a ribonucleoside 5'-diphosphate. Involved in mRNA degradation. Catalyzes the phosphorolysis of single-stranded polyribonucleotides processively in the 3'- to 5'-direction. The polypeptide is Polyribonucleotide nucleotidyltransferase (Herpetosiphon aurantiacus (strain ATCC 23779 / DSM 785 / 114-95)).